Consider the following 3660-residue polypeptide: Dystrophin (3660 aa).

The interval 1–244 is actin-binding; sequence MSAHVLWYEE…YVTSLFQVLP (244 aa). 2 consecutive Calponin-homology (CH) domains span residues 19–123 and 138–244; these read DVQK…LHWQ and TNSE…QVLP. Spectrin repeat units lie at residues 341-449, 450-558, 561-669, 721-830, 832-936, 945-1047, 1050-1156, 1159-1265, 1268-1369, 1470-1570, 1573-1678, 1681-1782, 1879-1981, 2013-2103, 2106-2211, 2214-2321, 2472-2574, 2577-2683, 2686-2799, 2802-2904, 2906-2928, and 2931-3037; these read MDLD…NLHK, ILMD…LLQD, RKWQ…QVSQ, EIRK…WLEY, NSII…QLQT, RYKD…KLED, TKLQ…ALKG, DKTV…TLEE, ACWH…SLEQ, EQRL…ELEK, KLSR…LLME, KHME…FIPL, HQWY…TVLE, LSEV…RFDK, EKWR…RIEE, NILS…EIEI, FNKA…QLHE, KDST…ALES, LMLQ…HLEA, DQWK…LRRQ, DDVR…KIDD, and ERLQ…QLHE. The WW domain occupies 3052–3085; sequence TSVQGPWERAISPNKVPYYINHETQTTCWDHPKM. The segment at 3305-3361 adopts a ZZ-type; degenerate zinc-finger fold; the sequence is KHQAKCNICKECPIIGFRYRSLKHFNYDICQSCFFSGRVAKGHKMHYPMVEYCTPTT. Zn(2+)-binding residues include C3310, C3313, C3334, and C3337. Disordered stretches follow at residues 3503–3526 and 3575–3660; these read KQQH…VSPQ and PQAD…EATM. Composition is skewed to polar residues over residues 3582–3601 and 3637–3647; these read NGTT…SSQP and QLNNSFPSSRG.

It is found in the cell membrane. Its subcellular location is the sarcolemma. It localises to the cytoplasm. The protein resides in the cytoskeleton. The protein localises to the postsynaptic cell membrane. Functionally, may play a role in anchoring the cytoskeleton to the plasma membrane. The polypeptide is Dystrophin (DMD) (Gallus gallus (Chicken)).